A 123-amino-acid polypeptide reads, in one-letter code: Large ribosomal subunit protein eL8 (123 aa).

It belongs to the eukaryotic ribosomal protein eL8 family. Part of the 50S ribosomal subunit. Probably part of the RNase P complex.

The protein resides in the cytoplasm. In terms of biological role, multifunctional RNA-binding protein that recognizes the K-turn motif in ribosomal RNA, the RNA component of RNase P, box H/ACA, box C/D and box C'/D' sRNAs. In Thermococcus gammatolerans (strain DSM 15229 / JCM 11827 / EJ3), this protein is Large ribosomal subunit protein eL8.